We begin with the raw amino-acid sequence, 432 residues long: Cyclic di-GMP phosphodiesterase CdgJ (432 aa).

The region spanning Met1–Ile232 is the EAL domain. Residues Val226–Asp413 enclose the HDOD domain.

It carries out the reaction 3',3'-c-di-GMP + H2O = 5'-phosphoguanylyl(3'-&gt;5')guanosine + H(+). Its function is as follows. Phosphodiesterase (PDE) that catalyzes the hydrolysis of cyclic diguanylate (c-di-GMP). Positively regulates motility and negatively regulates biofilm formation. This is Cyclic di-GMP phosphodiesterase CdgJ from Vibrio cholerae serotype O1 (strain ATCC 39315 / El Tor Inaba N16961).